The chain runs to 363 residues: Flagellar P-ring protein (363 aa).

The signal sequence occupies residues 1–20 (MKLKLFLLSVLLLVSGSSQA).

The protein belongs to the FlgI family. In terms of assembly, the basal body constitutes a major portion of the flagellar organelle and consists of four rings (L,P,S, and M) mounted on a central rod.

It is found in the periplasm. Its subcellular location is the bacterial flagellum basal body. Functionally, assembles around the rod to form the L-ring and probably protects the motor/basal body from shearing forces during rotation. The sequence is that of Flagellar P-ring protein from Shewanella woodyi (strain ATCC 51908 / MS32).